The chain runs to 283 residues: Bifunctional protein FolD (283 aa).

NADP(+) contacts are provided by residues 159–161 (GRS), Ser184, and Ile225.

The protein belongs to the tetrahydrofolate dehydrogenase/cyclohydrolase family. As to quaternary structure, homodimer.

The enzyme catalyses (6R)-5,10-methylene-5,6,7,8-tetrahydrofolate + NADP(+) = (6R)-5,10-methenyltetrahydrofolate + NADPH. It catalyses the reaction (6R)-5,10-methenyltetrahydrofolate + H2O = (6R)-10-formyltetrahydrofolate + H(+). Its pathway is one-carbon metabolism; tetrahydrofolate interconversion. In terms of biological role, catalyzes the oxidation of 5,10-methylenetetrahydrofolate to 5,10-methenyltetrahydrofolate and then the hydrolysis of 5,10-methenyltetrahydrofolate to 10-formyltetrahydrofolate. The chain is Bifunctional protein FolD from Methanoculleus marisnigri (strain ATCC 35101 / DSM 1498 / JR1).